A 426-amino-acid polypeptide reads, in one-letter code: MTATNELLQDLKARGLIAQCTADEELAEHLSTDCRTLYCGFDPTADSLHIGSLVPLLVLKRFQQAGHKPLALVGGATGLIGDPSFKAAERQLNTNEVVGDWVNKIKAQVSAFVDFTEEKNGAEVVNNLDWIGQINVIEFMRDVGKHFSVNAMIQKESVKQRIDREGSGISFTEFSYMLLQSYDFAALNKAKECTLQIGGSDQWGNITGGIDLTRRMNRNKVFGLTLPLVTKSDGTKFGKTESGTIWLDSNKTSPYAFYQFWLGTADADVYNFLRFFTFLTVEEIAAVEESDKSVQGRPEGQGILAREVTRLVHGEEGLASAERITKALFSGDLSSLTETDLAQLALDGLPSTELEASEQTIVEVLTQSELAKSNKMAREFIGNGAVSVNGEKVADTEAVLKKEDALFGKYSVIKRGKKLFNLYIWK.

Tyr38 contacts L-tyrosine. Residues 43–52 (PTADSLHIGS) carry the 'HIGH' region motif. Residues Tyr176 and Gln180 each coordinate L-tyrosine. The 'KMSKS' region signature appears at 236–240 (KFGKT). Residue Lys239 participates in ATP binding. The region spanning 359 to 426 (QTIVEVLTQS…KKLFNLYIWK (68 aa)) is the S4 RNA-binding domain.

This sequence belongs to the class-I aminoacyl-tRNA synthetase family. TyrS type 1 subfamily. Homodimer.

It localises to the cytoplasm. The catalysed reaction is tRNA(Tyr) + L-tyrosine + ATP = L-tyrosyl-tRNA(Tyr) + AMP + diphosphate + H(+). In terms of biological role, catalyzes the attachment of tyrosine to tRNA(Tyr) in a two-step reaction: tyrosine is first activated by ATP to form Tyr-AMP and then transferred to the acceptor end of tRNA(Tyr). The chain is Tyrosine--tRNA ligase from Aliivibrio fischeri (strain ATCC 700601 / ES114) (Vibrio fischeri).